The chain runs to 1090 residues: ATP-dependent helicase/deoxyribonuclease subunit B (1090 aa).

7 to 14 (GPVGSGKS) provides a ligand contact to ATP. [4Fe-4S] cluster contacts are provided by C719, C1035, C1038, and C1044.

It belongs to the helicase family. AddB/RexB type 1 subfamily. Heterodimer of AddA and AddB. The cofactor is Mg(2+). It depends on [4Fe-4S] cluster as a cofactor.

Functionally, the heterodimer acts as both an ATP-dependent DNA helicase and an ATP-dependent, dual-direction single-stranded exonuclease. Recognizes the chi site generating a DNA molecule suitable for the initiation of homologous recombination. The AddB subunit has 5' -&gt; 3' nuclease activity but not helicase activity. In Carboxydothermus hydrogenoformans (strain ATCC BAA-161 / DSM 6008 / Z-2901), this protein is ATP-dependent helicase/deoxyribonuclease subunit B.